The following is a 78-amino-acid chain: UPF0335 protein RBE_1185 (78 aa).

It belongs to the UPF0335 family.

The protein is UPF0335 protein RBE_1185 of Rickettsia bellii (strain RML369-C).